The sequence spans 176 residues: NAD(P)H-quinone oxidoreductase subunit 6, chloroplastic (176 aa).

The next 5 helical transmembrane spans lie at 10–30 (FLLV…VLLP), 32–52 (PIFS…LYIL), 61–81 (AQLL…VMFM), 92–112 (LWTV…FSLM), and 152–172 (FFLP…GAIS).

The protein belongs to the complex I subunit 6 family. NDH is composed of at least 16 different subunits, 5 of which are encoded in the nucleus.

It is found in the plastid. It localises to the chloroplast thylakoid membrane. It carries out the reaction a plastoquinone + NADH + (n+1) H(+)(in) = a plastoquinol + NAD(+) + n H(+)(out). The enzyme catalyses a plastoquinone + NADPH + (n+1) H(+)(in) = a plastoquinol + NADP(+) + n H(+)(out). Its function is as follows. NDH shuttles electrons from NAD(P)H:plastoquinone, via FMN and iron-sulfur (Fe-S) centers, to quinones in the photosynthetic chain and possibly in a chloroplast respiratory chain. The immediate electron acceptor for the enzyme in this species is believed to be plastoquinone. Couples the redox reaction to proton translocation, and thus conserves the redox energy in a proton gradient. The chain is NAD(P)H-quinone oxidoreductase subunit 6, chloroplastic (ndhG) from Barbarea verna (Land cress).